A 407-amino-acid chain; its full sequence is Lysosome-associated membrane glycoprotein 1 (407 aa).

The first 21 residues, 1-21, serve as a signal peptide directing secretion; it reads MAAPGARRPLLLLLLAGLAHS. A first lumenal domain region spans residues 22-189; sequence APALFEVKDN…SKEETRCPQD (168 aa). At 22-371 the chain is on the lumenal side; it reads APALFEVKDN…VEECVQDGNN (350 aa). N-linked (GlcNAc...) asparagine glycans are attached at residues Asn-32, Asn-59, Asn-71, Asn-79, Asn-102, Asn-116, Asn-125, Asn-145, Asn-160, and Asn-178. Residues Cys-36 and Cys-75 are joined by a disulfide bond. Cys-150 and Cys-186 are disulfide-bonded. Residues 180 to 211 form a disordered region; that stretch reads SKEETRCPQDQPSPTTGPPSPSPPLVPTNPSV. The hinge stretch occupies residues 190–219; the sequence is QPSPTTGPPSPSPPLVPTNPSVSKYNVTGD. Residues 194 to 206 are compositionally biased toward pro residues; sequence TTGPPSPSPPLVP. 8 N-linked (GlcNAc...) asparagine glycosylation sites follow: Asn-215, Asn-220, Asn-233, Asn-241, Asn-271, Asn-283, Asn-297, and Asn-312. Residues 220 to 371 are second lumenal domain; that stretch reads NGTCLLASMA…VEECVQDGNN (152 aa). Cysteines 223 and 260 form a disulfide. A disulfide bond links Cys-328 and Cys-365. The chain crosses the membrane as a helical span at residues 372–395; it reads MLIPIAVGGALAGLVLIVLIAYLI. Residues 396-407 are Cytoplasmic-facing; the sequence is GRKRSHAGYQTI.

Belongs to the LAMP family. In terms of assembly, interacts with ABCB9; this interaction strongly stabilizes ABCB9 and protects ABCB9 against lysosomal degradation. Interacts with FURIN. Interacts with TMEM175; inhibiting the proton channel activity of TMEM175. O- and N-glycosylated; some of the N-glycans attached to LAMP-1 are polylactosaminoglycans.

The protein localises to the lysosome membrane. It is found in the endosome membrane. It localises to the late endosome membrane. The protein resides in the cell membrane. Its subcellular location is the cytolytic granule membrane. Functionally, lysosomal membrane glycoprotein which plays an important role in lysosome biogenesis, lysosomal pH regulation, autophagy and cholesterol homeostasis. Acts as an important regulator of lysosomal lumen pH regulation by acting as a direct inhibitor of the proton channel TMEM175, facilitating lysosomal acidification for optimal hydrolase activity. Also plays an important role in NK-cells cytotoxicity. Mechanistically, participates in cytotoxic granule movement to the cell surface and perforin trafficking to the lytic granule. In addition, protects NK-cells from degranulation-associated damage induced by their own cytotoxic granule content. Presents carbohydrate ligands to selectins. In Rattus norvegicus (Rat), this protein is Lysosome-associated membrane glycoprotein 1 (Lamp1).